The chain runs to 539 residues: Tyrosinase (539 aa).

Residues histidine 63, histidine 84, histidine 93, histidine 290, histidine 294, and histidine 333 each coordinate Cu cation. Positions cysteine 82–histidine 84 form a cross-link, 2'-(S-cysteinyl)-histidine (Cys-His).

The protein belongs to the tyrosinase family. As to quaternary structure, homotetramer. Requires Cu(2+) as cofactor. In terms of processing, the N-terminus is blocked.

The catalysed reaction is 2 L-dopa + O2 = 2 L-dopaquinone + 2 H2O. It carries out the reaction L-tyrosine + O2 = L-dopaquinone + H2O. Activated by acidifying treatment at pH 3.0. Functionally, this is a copper-containing oxidase that functions in the formation of pigments such as melanins and other polyphenolic compounds. In Aspergillus oryzae (strain ATCC 42149 / RIB 40) (Yellow koji mold), this protein is Tyrosinase (melO).